Here is a 200-residue protein sequence, read N- to C-terminus: ATP-dependent Clp protease proteolytic subunit (200 aa).

The active-site Nucleophile is the serine 102. Histidine 127 is a catalytic residue.

The protein belongs to the peptidase S14 family. In terms of assembly, fourteen ClpP subunits assemble into 2 heptameric rings which stack back to back to give a disk-like structure with a central cavity, resembling the structure of eukaryotic proteasomes.

Its subcellular location is the cytoplasm. The enzyme catalyses Hydrolysis of proteins to small peptides in the presence of ATP and magnesium. alpha-casein is the usual test substrate. In the absence of ATP, only oligopeptides shorter than five residues are hydrolyzed (such as succinyl-Leu-Tyr-|-NHMec, and Leu-Tyr-Leu-|-Tyr-Trp, in which cleavage of the -Tyr-|-Leu- and -Tyr-|-Trp bonds also occurs).. In terms of biological role, cleaves peptides in various proteins in a process that requires ATP hydrolysis. Has a chymotrypsin-like activity. Plays a major role in the degradation of misfolded proteins. This chain is ATP-dependent Clp protease proteolytic subunit, found in Dehalococcoides mccartyi (strain ATCC BAA-2266 / KCTC 15142 / 195) (Dehalococcoides ethenogenes (strain 195)).